The following is a 242-amino-acid chain: Terpene cyclase dpfgB (242 aa).

Helical transmembrane passes span 15–37 (DVAW…NYVG), 51–71 (ALMA…IYPF), 75–95 (LEMY…YTAV), 112–132 (LPLI…ALAA), 141–161 (AWSA…QLLC), 169–189 (SYFL…QDIL), and 205–225 (LYIW…ICLW).

The protein belongs to the paxB family.

The protein localises to the membrane. It functions in the pathway secondary metabolite biosynthesis; terpenoid biosynthesis. Its function is as follows. Terpene cyclase; part of the gene cluster that mediates the biosynthesis of diterpenoid pyrones. The first step of the pathway is the synthesis of the alpha-pyrone moiety by the polyketide synthase dpfgA via condensation of one acetyl-CoA starter unit with 3 malonyl-CoA units and 2 methylations. The alpha-pyrone is then combined with geranylgeranyl pyrophosphate (GGPP) formed by the GGPP synthase dpfgD through the action of the prenyltransferase dpfgC to yield a linear alpha-pyrone diterpenoid. Subsequent steps in the diterpenoid pyrone biosynthetic pathway involve the decalin core formation, which is initiated by the epoxidation of the C10-C11 olefin by the FAD-dependent oxidoreductase dpfgE, and is followed by a cyclization cascade catalyzed by the terpene cyclase dpfgB. The short chain dehydrogenase/reductase dpfgG then oxidizes the 8S hydroxy group to a ketone and the short chain dehydrogenase/reductase dpfgH reduces the ketone to the 8R hydroxy group to yield higginsianin B. Higginsianin B is further methylated by the methyltransferase dpfgI to produce the intermediate named FDDP B. The cytochrome P450 monooxygenase dfgpJ then catalyzes a three-step oxidation at C-27 to generate a carboxylic acid as well as C-26 hydroxylation. Finally, methyltransferase dpfgK methylates the carboxylic acid generated by dpfgJ, yielding the final diterpenoid pyrones from the pathway which were named FDDP D and FDDP E. The polypeptide is Terpene cyclase dpfgB (Gibberella zeae (strain ATCC MYA-4620 / CBS 123657 / FGSC 9075 / NRRL 31084 / PH-1) (Wheat head blight fungus)).